Consider the following 227-residue polypeptide: PKHD-type hydroxylase NE2125 (227 aa).

The region spanning 78–179 (KIVPPFFNRY…RLACFMFIQS (102 aa)) is the Fe2OG dioxygenase domain. 3 residues coordinate Fe cation: His97, Asp99, and His160. Residue Arg170 coordinates 2-oxoglutarate.

Fe(2+) is required as a cofactor. L-ascorbate serves as cofactor.

The polypeptide is PKHD-type hydroxylase NE2125 (Nitrosomonas europaea (strain ATCC 19718 / CIP 103999 / KCTC 2705 / NBRC 14298)).